The sequence spans 148 residues: Transcriptional regulator MraZ (148 aa).

2 consecutive SpoVT-AbrB domains span residues 5–53 (ETAI…AEKE) and 82–125 (SAVL…SEQA).

The protein belongs to the MraZ family. In terms of assembly, forms oligomers.

The protein resides in the cytoplasm. It is found in the nucleoid. This is Transcriptional regulator MraZ from Xanthomonas oryzae pv. oryzae (strain MAFF 311018).